Reading from the N-terminus, the 194-residue chain is RNA polymerase II subunit A C-terminal domain phosphatase SSU72 like protein 3 (194 aa).

Belongs to the SSU72 phosphatase family.

The protein localises to the nucleus. It carries out the reaction O-phospho-L-seryl-[protein] + H2O = L-seryl-[protein] + phosphate. The catalysed reaction is O-phospho-L-threonyl-[protein] + H2O = L-threonyl-[protein] + phosphate. Protein phosphatase that catalyzes the dephosphorylation of the C-terminal domain of RNA polymerase II. Plays a role in RNA processing and termination. This chain is RNA polymerase II subunit A C-terminal domain phosphatase SSU72 like protein 3, found in Homo sapiens (Human).